The primary structure comprises 1079 residues: Extracellular calcium-sensing receptor (1079 aa).

Positions Met1–Ala19 are cleaved as a signal peptide. At Tyr20–Glu610 the chain is on the extracellular side. The interval Pro22 to Pro188 is ligand-binding 1 (LB1). A disulfide bond links Cys60 and Cys101. Residue Arg66–Trp70 coordinates phosphate. Residues Ile81, Ser84, Leu87, and Leu88 each coordinate Ca(2+). N-linked (GlcNAc...) asparagine glycosylation is present at Asn90. Thr100 provides a ligand contact to Ca(2+). The N-linked (GlcNAc...) asparagine glycan is linked to Asn130. Thr145 serves as a coordination point for Ca(2+). L-tryptophan contacts are provided by Ser147, Ala168, and Ser170. Positions 170, 188, 190, 231, and 234 each coordinate Ca(2+). The tract at residues Asn189 to Ala324 is ligand-binding 2 (LB2). Cystine bridges form between Cys236–Cys561, Cys358–Cys395, Cys437–Cys449, Cys542–Cys562, Cys546–Cys565, Cys568–Cys582, and Cys585–Cys598. Spermine-binding residues include Asp238 and Ser240. 2 N-linked (GlcNAc...) asparagine glycosylation sites follow: Asn261 and Asn287. A Ca(2+)-binding site is contributed by Glu297. L-tryptophan is bound at residue Glu297. N-linked (GlcNAc...) asparagine glycosylation is found at Asn386 and Asn400. Phosphate is bound at residue Arg415–Ser417. 3 N-linked (GlcNAc...) asparagine glycosylation sites follow: Asn446, Asn468, and Asn488. A Ca(2+)-binding site is contributed by Tyr489. The N-linked (GlcNAc...) asparagine glycan is linked to Asn541. Residues Cys542 to Phe612 form a cysteine-rich (CR) region. Gly557 is a Ca(2+) binding site. Asn594 carries N-linked (GlcNAc...) asparagine glycosylation. Residues Pro611–Lys636 form a helical membrane-spanning segment. Topologically, residues Phe637–Arg648 are cytoplasmic. Residues Phe637–Arg648 are intracellular loop 1 (ICL1). The chain crosses the membrane as a helical span at residues Glu649–Phe668. Residues Ile669–Asp674 are Extracellular-facing. A helical membrane pass occupies residues Trp675–Lys698. The Cytoplasmic segment spans residues Thr699–Asn722. Positions Thr699 to Asn722 are intracellular loop 2 (ICL2). A helical membrane pass occupies residues Leu723–Thr745. Residues Ala746–Ser769 are Extracellular-facing. Residues Leu770–Phe789 traverse the membrane as a helical segment. Residues Phe790–Lys805 lie on the Cytoplasmic side of the membrane. The interval Phe790–Lys805 is intracellular loop 3 (ICL3). A helical membrane pass occupies residues Phe806–Thr828. Residues Tyr829–Phe832 lie on the Extracellular side of the membrane. The helical transmembrane segment at Val833 to Phe854 threads the bilayer. Topologically, residues Asn855–Ser1079 are cytoplasmic. The C-terminus stretch occupies residues Asn855–Ser1079. Residues Ala880–Ser900 are interaction with RNF19A. Thr888 is subject to Phosphothreonine. Residues Arg890–Arg898 form an arginine-rich retention motif region. Phosphoserine is present on residues Ser892, Ser899, and Ser920. Residues Ser892–Ser918 show a composition bias toward low complexity. A disordered region spans residues Ser892–Cys963. Residues Pro945–Gln954 show a composition bias toward pro residues. Ser1062 carries the post-translational modification Phosphoserine.

The protein belongs to the G-protein coupled receptor 3 family. As to quaternary structure, homodimer; disulfide-linked. Interacts with VCP. Interacts with ARRB1. In terms of processing, phosphorylation at Thr-888 by PKC impairs coupling with G(q)/G(11) G-proteins, while it does not affect G(i)/G(o)-coupling. Phosphorylation at Ser-892 by PKC and Ser-899 by PKA promote plasma membrane localization. Ubiquitinated by RNF19A; which induces proteasomal degradation.

It localises to the cell membrane. Its activity is regulated as follows. In resting state, adopts an open conformation, anion-binding promoting the inactive configuration. Upon aromatic amino acid-binding, the groove in the extracellular venus flytrap module is closed, thereby inducing the formation of a novel homodimer interface between subunits. Calcium ions stabilize the active state by enhancing homodimer interactions between membrane-proximal domains to fully activate the receptor. Upon activation, the homodimer adopts an asymmetric configuration of the 7-transmembrane region that primes one protomer for G-protein coupling. G-protein binding expands the transmembrane dimer interface; the restriction imposed by the receptor dimer, in combination with intracellular loop 2 (ICL2), enables G-protein activation by facilitating conformational transition of G-protein alpha. Coupling to different classes of G-proteins results in distinct CASR-G-protein interfaces. In contrast to human protein, not activated by AMG 416, a D-amino acid-containing peptide agonist: this is probably due to the absence of a Cys residue at position 482, which forms a disulfide bond with the AMG 416 peptide agonist in human and that is replaced by a Tyr residue in pig. Its function is as follows. G-protein-coupled receptor that senses changes in the extracellular concentration of calcium ions and plays a key role in maintaining calcium homeostasis. Senses fluctuations in the circulating calcium concentration: activated by elevated circulating calcium, leading to decreased parathyroid hormone (PTH) secretion in parathyroid glands. In kidneys, acts as a key regulator of renal tubular calcium resorption. Ligand binding causes a conformation change that triggers signaling via guanine nucleotide-binding proteins (G-proteins) and modulates the activity of downstream effectors. CASR is coupled with different G(q)/G(11), G(i)/G(o)- or G(s)-classes of G-proteins depending on the context. In the parathyroid and kidney, CASR signals through G(q)/G(11) and G(i)/G(o) G-proteins: G(q)/G(11) coupling activates phospholipase C-beta, releasing diacylglycerol (DAG) and inositol 1,4,5-trisphosphate (IP3) second messengers, while G(i)/G(o) coupling mediates inhibition of adenylate cyclase activity. The G-protein-coupled receptor activity is activated by a co-agonist mechanism: aromatic amino acids, such as Trp or Phe, act concertedly with divalent cations, such as calcium or magnesium, to achieve full receptor activation. Acts as an activator of the NLRP3 inflammasome via G(i)/G(o)-mediated signaling: down-regulation of cyclic AMP (cAMP) relieving NLRP3 inhibition by cAMP. Acts as a regulator of proton-sensing receptor GPR68 in a seesaw manner: CASR-mediated signaling inhibits GPR68 signaling in response to extracellular calcium, while GPR68 inhibits CASR in presence of extracellular protons. The chain is Extracellular calcium-sensing receptor (CASR) from Sus scrofa (Pig).